The following is a 376-amino-acid chain: Glutamate 5-kinase (376 aa).

Lys-10 is an ATP binding site. The substrate site is built by Ser-50, Asp-137, and Asn-149. 169–170 is a binding site for ATP; that stretch reads TD. The PUA domain maps to 275–353; it reads RGRLVLDAGA…AEIAGVLGFM (79 aa).

Belongs to the glutamate 5-kinase family.

Its subcellular location is the cytoplasm. It carries out the reaction L-glutamate + ATP = L-glutamyl 5-phosphate + ADP. The protein operates within amino-acid biosynthesis; L-proline biosynthesis; L-glutamate 5-semialdehyde from L-glutamate: step 1/2. Its function is as follows. Catalyzes the transfer of a phosphate group to glutamate to form L-glutamate 5-phosphate. The polypeptide is Glutamate 5-kinase (Alcanivorax borkumensis (strain ATCC 700651 / DSM 11573 / NCIMB 13689 / SK2)).